Reading from the N-terminus, the 153-residue chain is Small ribosomal subunit protein bS6 (153 aa).

Residues glutamate 94–alanine 153 form a disordered region.

The protein belongs to the bacterial ribosomal protein bS6 family.

Its function is as follows. Binds together with bS18 to 16S ribosomal RNA. In Agrobacterium fabrum (strain C58 / ATCC 33970) (Agrobacterium tumefaciens (strain C58)), this protein is Small ribosomal subunit protein bS6.